Here is a 341-residue protein sequence, read N- to C-terminus: Mitochondrial protein C2orf69 homolog (341 aa).

A mitochondrion-targeting transit peptide spans 1–35; sequence MLQVVQSPHNLVFMGSIRSVVACLSLAAVARKMTA.

Belongs to the C2orf69 family.

The protein resides in the mitochondrion matrix. May play a role in the respiratory chain. This is Mitochondrial protein C2orf69 homolog from Danio rerio (Zebrafish).